The following is a 203-amino-acid chain: uncharacterized protein (203 aa).

This is an uncharacterized protein from Haemophilus influenzae (strain ATCC 51907 / DSM 11121 / KW20 / Rd).